The chain runs to 162 residues: Serine-protein kinase RsbW (162 aa).

It belongs to the anti-sigma-factor family.

It catalyses the reaction L-seryl-[protein] + ATP = O-phospho-L-seryl-[protein] + ADP + H(+). It carries out the reaction L-threonyl-[protein] + ATP = O-phospho-L-threonyl-[protein] + ADP + H(+). Negative regulator of sigma-B activity. Phosphorylates and inactivates its specific antagonist protein, RsbV. Upon phosphorylation of RsbV, RsbW is released and binds to sigma-B, thereby blocking its ability to form an RNA polymerase holoenzyme (E-sigma-B). This chain is Serine-protein kinase RsbW, found in Bacillus pumilus (strain SAFR-032).